The primary structure comprises 440 residues: Ribosomal protein uS12 methylthiotransferase RimO (440 aa).

One can recognise an MTTase N-terminal domain in the interval 8-124 (TSVFLLSLGC…VLDALGARYH (117 aa)). Residues cysteine 17, cysteine 53, cysteine 87, cysteine 148, cysteine 152, and cysteine 155 each coordinate [4Fe-4S] cluster. A Radical SAM core domain is found at 134-363 (LTPPHSSYLK…MELQEEIARK (230 aa)). The TRAM domain maps to 366 to 437 (EAFVGSLMTV…AYELHGTVES (72 aa)).

This sequence belongs to the methylthiotransferase family. RimO subfamily. [4Fe-4S] cluster is required as a cofactor.

Its subcellular location is the cytoplasm. The enzyme catalyses L-aspartate(89)-[ribosomal protein uS12]-hydrogen + (sulfur carrier)-SH + AH2 + 2 S-adenosyl-L-methionine = 3-methylsulfanyl-L-aspartate(89)-[ribosomal protein uS12]-hydrogen + (sulfur carrier)-H + 5'-deoxyadenosine + L-methionine + A + S-adenosyl-L-homocysteine + 2 H(+). Its function is as follows. Catalyzes the methylthiolation of an aspartic acid residue of ribosomal protein uS12. The chain is Ribosomal protein uS12 methylthiotransferase RimO from Chlorobium luteolum (strain DSM 273 / BCRC 81028 / 2530) (Pelodictyon luteolum).